A 154-amino-acid polypeptide reads, in one-letter code: Ubiquitin-conjugating enzyme E2 L3 (154 aa).

In terms of domain architecture, UBC core spans 2-149 (AASRRLMKEL…AEEFTKKYGE (148 aa)). Residue Cys-86 is the Glycyl thioester intermediate of the active site. Lys-131 bears the N6-acetyllysine mark.

It belongs to the ubiquitin-conjugating enzyme family. Interacts with PRKN; involved in ubiquitination and degradation of misfolded proteins. Interacts with UBE3A. Interacts with CCNB1IP1, CBL, ZAP70, RNF19A, RNF19B and RNF144B. Interacts with ARIH1. Interacts with ARIH2 (via RING-type 1). Interacts with NCOA1; they functionally interact to regulate progesterone receptor transcriptional activity. Interacts with NDFIP1 (via N-terminus); the interaction mediates recruitment of UBE2L3 to ITCH and causes MAP3K7 ubiquitination. Post-translationally, ubiquitinated. The alteration of UBE2L3 protein levels during the S-phase of the cell cycle is due to ubiquitin-dependent proteasomal degradation. Autoubiquitinated in vitro.

Its subcellular location is the nucleus. The protein resides in the cytoplasm. The catalysed reaction is S-ubiquitinyl-[E1 ubiquitin-activating enzyme]-L-cysteine + [E2 ubiquitin-conjugating enzyme]-L-cysteine = [E1 ubiquitin-activating enzyme]-L-cysteine + S-ubiquitinyl-[E2 ubiquitin-conjugating enzyme]-L-cysteine.. The protein operates within protein modification; protein ubiquitination. In terms of biological role, ubiquitin-conjugating enzyme E2 that specifically acts with HECT-type and RBR family E3 ubiquitin-protein ligases. Does not function with most RING-containing E3 ubiquitin-protein ligases because it lacks intrinsic E3-independent reactivity with lysine: in contrast, it has activity with the RBR family E3 enzymes, such as PRKN, RNF31 and ARIH1, that function like RING-HECT hybrids. Accepts ubiquitin from the E1 complex and catalyzes its covalent attachment to other proteins. Mediates ubiquitination by the CUL9-RBX1 complex. In vitro catalyzes 'Lys-11'-linked polyubiquitination. Involved in the selective degradation of short-lived and abnormal proteins. Down-regulated during the S-phase it is involved in progression through the cell cycle. Regulates nuclear hormone receptors transcriptional activity. May play a role in myelopoiesis. The chain is Ubiquitin-conjugating enzyme E2 L3 (UBE2L3) from Bos taurus (Bovine).